Reading from the N-terminus, the 107-residue chain is UPF0060 membrane protein ZMO1566 (107 aa).

Transmembrane regions (helical) follow at residues 4–24 (LLYI…WAWI), 29–49 (SPLW…LLTF), 55–75 (AGKA…LWSW), and 84–104 (HWDL…LWMP).

This sequence belongs to the UPF0060 family.

Its subcellular location is the cell inner membrane. The polypeptide is UPF0060 membrane protein ZMO1566 (Zymomonas mobilis subsp. mobilis (strain ATCC 31821 / ZM4 / CP4)).